A 694-amino-acid chain; its full sequence is Probable methyltransferase PMT11 (694 aa).

Over 1–14 (MKPLTNGDLFKSPT) the chain is Cytoplasmic. Residues 15–32 (LIKISALVFVTVAFFYLG) form a helical; Signal-anchor for type II membrane protein membrane-spanning segment. At 33–694 (KHWSDDGYQQ…LTCEKRLLRA (662 aa)) the chain is on the lumenal side. Asn-69 and Asn-77 each carry an N-linked (GlcNAc...) asparagine glycan. The interval 83–128 (IPATIRQQPPSVVADTEKVKVEANPPPPPPPSPSPPPPPGPVKSFG) is disordered. Over residues 106 to 123 (NPPPPPPPSPSPPPPPGP) the composition is skewed to pro residues. Asn-155, Asn-378, and Asn-423 each carry an N-linked (GlcNAc...) asparagine glycan.

It belongs to the methyltransferase superfamily.

It localises to the golgi apparatus membrane. This Arabidopsis thaliana (Mouse-ear cress) protein is Probable methyltransferase PMT11.